Here is a 202-residue protein sequence, read N- to C-terminus: Dephospho-CoA kinase (202 aa).

In terms of domain architecture, DPCK spans 4-201; sequence VIGLTGGIAS…QKYLAMSKQN (198 aa). 12–17 is a binding site for ATP; it reads ASGKTT.

The protein belongs to the CoaE family.

The protein localises to the cytoplasm. The catalysed reaction is 3'-dephospho-CoA + ATP = ADP + CoA + H(+). Its pathway is cofactor biosynthesis; coenzyme A biosynthesis; CoA from (R)-pantothenate: step 5/5. Functionally, catalyzes the phosphorylation of the 3'-hydroxyl group of dephosphocoenzyme A to form coenzyme A. This chain is Dephospho-CoA kinase, found in Vibrio vulnificus (strain YJ016).